The sequence spans 676 residues: Transketolase 7 (676 aa).

H36 contacts substrate. Thiamine diphosphate-binding positions include H76 and 125-127; that span reads GPL. Mg(2+) is bound at residue D166. Residues G167 and N196 each contribute to the thiamine diphosphate site. Mg(2+) contacts are provided by N196 and I198. The substrate site is built by H273, R367, and S394. Thiamine diphosphate is bound at residue H273. Thiamine diphosphate is bound by residues E421 and F448. Catalysis depends on E421, which acts as the Proton donor. H472, D480, and R531 together coordinate substrate.

It belongs to the transketolase family. As to quaternary structure, homodimer. Mg(2+) is required as a cofactor. The cofactor is Ca(2+). Requires Mn(2+) as cofactor. It depends on Co(2+) as a cofactor. Thiamine diphosphate serves as cofactor. As to expression, leaves and roots.

The catalysed reaction is D-sedoheptulose 7-phosphate + D-glyceraldehyde 3-phosphate = aldehydo-D-ribose 5-phosphate + D-xylulose 5-phosphate. Its function is as follows. Could be involved in the conversion of sugars, which are a major phenomenon in the rehydration process. In terms of biological role, catalyzes the transfer of a two-carbon ketol group from a ketose donor to an aldose acceptor, via a covalent intermediate with the cofactor thiamine pyrophosphate. In Craterostigma plantagineum (Blue gem), this protein is Transketolase 7 (TKT7).